The following is a 963-amino-acid chain: Protein NLP2 (963 aa).

Residues 635-716 form the RWP-RK domain; sequence RRPGEKRRTK…IDSVQGVQGS (82 aa). Over residues 734-755 the composition is skewed to polar residues; the sequence is MSGTGTSFKNPNAQTENGVSAQ. Positions 734-794 are disordered; that stretch reads MSGTGTSFKN…QSTNTGTTSN (61 aa). Residues 756 to 794 show a composition bias toward low complexity; sequence GTAAAPKSPPSSSCSHSSGSSTCCSTGANQSTNTGTTSN. A PB1 domain is found at 862 to 945; sequence ASKVKATFGE…RTIKISVHEA (84 aa).

It localises to the nucleus. In terms of biological role, probable transcription factor. This chain is Protein NLP2 (NLP2), found in Arabidopsis thaliana (Mouse-ear cress).